The primary structure comprises 149 residues: Calmodulin (149 aa).

A2 is subject to N-acetylalanine. EF-hand domains lie at 8-43, 44-79, 81-116, and 117-149; these read EQIAEFKEAFSLFDKDGDGTITTKELGTVMRSLGQN, PTEAELQDMINEVDADGNGTIDFPEFLTMMARKMKD, DSEEEIREAFRVFDKDGNGFISAAELRHVMTNLGEK, and LTDEEVDEMIREADVDGDGQVNYEEFVNMMTNK. Positions 21, 23, 25, 27, 32, 57, 59, 61, 63, 68, 94, 96, 98, and 105 each coordinate Ca(2+). The residue at position 116 (K116) is an N6,N6,N6-trimethyllysine. Residues D130, D132, D134, Q136, and E141 each coordinate Ca(2+).

The protein belongs to the calmodulin family.

Its function is as follows. Calmodulin mediates the control of a large number of enzymes, ion channels and other proteins by Ca(2+). Among the enzymes to be stimulated by the calmodulin-Ca(2+) complex are a number of protein kinases and phosphatases. The sequence is that of Calmodulin from Ciona intestinalis (Transparent sea squirt).